A 276-amino-acid chain; its full sequence is TCP pilus virulence regulatory protein (276 aa).

In terms of domain architecture, HTH araC/xylS-type spans 172 to 269 (EKISCLVKSD…NVAPSEYLFM (98 aa)). 2 DNA-binding regions (H-T-H motif) span residues 189 to 210 (ADIC…ESRG) and 236 to 259 (IKQI…KSTM).

The protein resides in the cytoplasm. Functionally, probable regulatory protein for the tcp operon. This Vibrio cholerae serotype O1 (strain ATCC 39541 / Classical Ogawa 395 / O395) protein is TCP pilus virulence regulatory protein (tcpN).